A 219-amino-acid polypeptide reads, in one-letter code: MAAGGQPQGATPGQPDQNFDYMFKLLIIGNSSVGKTSFLFRYCDDSFTSAFVSTVGIDFKVKTVFRGDKRVKLQIWDTAGQERYRTITTAYYRGAMGFILMYDITNEESFNSVQDWCTQIKTYSWENAQVVLVGNKCDMDSERVVSMDRGRQLADQLGLEFFETSAKENINVKAVFEKLVEIICDKMAESLDKDPQQQPKGQKLEANPTQKPAQQQCNC.

GTP contacts are provided by residues 29-37 (GNSSVGKTS), 48-54 (TSAFVST), 77-81 (DTAGQ), 135-138 (NKCD), and 165-167 (SAK). Residues 51 to 59 (FVSTVGIDF) carry the Effector region motif. The segment at 191 to 219 (LDKDPQQQPKGQKLEANPTQKPAQQQCNC) is disordered. Polar residues predominate over residues 207–219 (NPTQKPAQQQCNC). S-geranylgeranyl cysteine attachment occurs at residues Cys217 and Cys219. Cysteine methyl ester is present on Cys219.

This sequence belongs to the small GTPase superfamily. Rab family.

It localises to the cell membrane. In terms of biological role, involved in exocytosis by regulating a late step in synaptic vesicle fusion. Could play a role in neurotransmitter release by regulating membrane flow in the nerve terminal. Plays a role in the recruitment of endophilin unc-57 to synaptic vesicles. Probably by controlling dense-core vesicle trafficking, plays a role in the AVG neuron-mediated formation of the right axon tract of the ventral nerve cord. This is Ras-related protein Rab-3 (rab-3) from Caenorhabditis elegans.